The primary structure comprises 435 residues: UDP-glucuronic acid decarboxylase 1 (435 aa).

The interval 1–33 is disordered; it reads MKQLHKQMSSKRDEETIPMSQSSPYSPKTLKHP. Residues 1 to 48 are Cytoplasmic-facing; that stretch reads MKQLHKQMSSKRDEETIPMSQSSPYSPKTLKHPRSLPRSLHYLFREQR. Residues 49-69 traverse the membrane as a helical; Signal-anchor for type II membrane protein segment; sequence LLFILVGILIGSTFFILQPSL. Residues 70–435 lie on the Lumenal side of the membrane; it reads SRLGAAESTS…ILNEDEGKGL (366 aa). The segment covering 91–100 has biased composition (polar residues); sequence DSPPSRSTFN. The disordered stretch occupies residues 91 to 110; the sequence is DSPPSRSTFNSGGGGGRTGR. The NAD(+) site is built by Gly-129, Phe-130, Val-131, Asp-150, Asn-151, Phe-153, Thr-154, Gly-155, Asp-175, and Val-176. Residue Ile-180 coordinates UDP-alpha-D-glucuronate. Leu-190 is a binding site for NAD(+). UDP-alpha-D-glucuronate is bound at residue Lys-208. Thr-209 serves as a coordination point for NAD(+). UDP-alpha-D-glucuronate contacts are provided by Asn-216, Gly-219, Lys-222, and Arg-223. NAD(+) contacts are provided by Tyr-262 and Lys-266. The active-site Proton acceptor is Tyr-262. Residue Tyr-276 coordinates UDP-alpha-D-glucuronate. NAD(+) contacts are provided by Thr-292 and Arg-303. Positions 380-401 are disordered; sequence EFKPNTADDPHKRKPDISKAKE. Positions 385 to 401 are enriched in basic and acidic residues; it reads TADDPHKRKPDISKAKE.

It belongs to the NAD(P)-dependent epimerase/dehydratase family. UDP-glucuronic acid decarboxylase subfamily. NAD(+) is required as a cofactor. In terms of tissue distribution, ubiquitous.

It localises to the golgi apparatus. It is found in the golgi stack membrane. The enzyme catalyses UDP-alpha-D-glucuronate + H(+) = UDP-alpha-D-xylose + CO2. It participates in nucleotide-sugar biosynthesis; UDP-alpha-D-xylose biosynthesis; UDP-alpha-D-xylose from UDP-alpha-D-glucuronate: step 1/1. Functionally, catalyzes the NAD-dependent decarboxylation of UDP-glucuronic acid to UDP-xylose. Necessary for the biosynthesis of the core tetrasaccharide in glycosaminoglycan biosynthesis. The sequence is that of UDP-glucuronic acid decarboxylase 1 from Arabidopsis thaliana (Mouse-ear cress).